A 65-amino-acid chain; its full sequence is Large ribosomal subunit protein bL35 (65 aa).

The protein belongs to the bacterial ribosomal protein bL35 family.

This Paraburkholderia xenovorans (strain LB400) protein is Large ribosomal subunit protein bL35.